A 779-amino-acid polypeptide reads, in one-letter code: Abnormal cell migration protein 10 (779 aa).

Residues 78–97 show a composition bias toward acidic residues; the sequence is NELEADTEEDIAETADDEES. Disordered stretches follow at residues 78 to 105, 189 to 217, and 242 to 302; these read NELE…EKTE, SSSR…PQQP, and AASS…NAEE. The segment covering 189 to 200 has biased composition (polar residues); that stretch reads SSSRENVKSIST. Low complexity predominate over residues 242 to 254; it reads AASSCSSPDGDSA. The span at 256–293 shows a compositional bias: polar residues; that stretch reads GDSSSTESSNNRCRNSAFSSNDSCRDSLNTPSPTQVSP. Residues 317–407 form the Ras-associating domain; the sequence is EAKVTKIFVK…NKLYFMRRPD (91 aa). Residues 456 to 566 enclose the PH domain; that stretch reads PPEMEGFLYL…WLVALRIAKN (111 aa). Polar residues-rich tracts occupy residues 645–660 and 688–698; these read SFSV…SRTS and RASTSSPTIPQ. The interval 645–763 is disordered; that stretch reads SFSVNSCQQS…SPMAPAKNDL (119 aa). Residues 708 to 729 are compositionally biased toward pro residues; the sequence is PAPPPVASVMRMPPPVTPPKPC.

The protein belongs to the MRL family. In terms of assembly, may interact (via Ras-associating and PH domains) with ced-10 (GTP-bound form).

It is found in the perikaryon. In terms of biological role, required cell non-autonomously for proper development of the excretory canals and for the long-range anterior-posterior migrations of embryonic neurons CAN, ALM and HSN. Plays a role, probably downstream of ced-10/rac1, in orientating axonal growth of HSN and AVM neurons in response to guidance cues such as slt-1. May regulate growth cone polarization by promoting asymmetric F-actin assembly. May be involved in signal transduction during cell migration. The sequence is that of Abnormal cell migration protein 10 from Caenorhabditis elegans.